The sequence spans 132 residues: Cytochrome B5 isoform C (132 aa).

The Cytochrome b5 heme-binding domain occupies 2 to 78 (ANLISFHDVA…MKKYCIGDVD (77 aa)). Residues His-37 and His-61 each coordinate heme. Residues 110–129 (LLIYLIPLLILGVAFALRFY) traverse the membrane as a helical segment.

It belongs to the cytochrome b5 family. Interacts with CER1, BI-1, FAH1 and FAH2.

Its subcellular location is the endoplasmic reticulum membrane. Membrane bound hemoprotein which function as an electron carrier for several membrane bound oxygenases, including fatty acid desaturases. The sequence is that of Cytochrome B5 isoform C from Arabidopsis thaliana (Mouse-ear cress).